A 361-amino-acid chain; its full sequence is Caspase activity and apoptosis inhibitor 1 (361 aa).

The span at 1–14 shows a compositional bias: basic residues; that stretch reads MTGKKSSREKRRKR. 2 disordered regions span residues 1 to 28 and 67 to 100; these read MTGK…APDI and GGSG…GSLQ. The segment covering 19–28 has biased composition (low complexity); that stretch reads AAAALAAPDI. S89 carries the post-translational modification Phosphoserine. At T90 the chain carries Phosphothreonine. A Glycyl lysine isopeptide (Lys-Gly) (interchain with G-Cter in SUMO2) cross-link involves residue K104. Phosphoserine is present on residues S120 and S203. Disordered stretches follow at residues 198 to 218 and 230 to 331; these read DNGM…MGSD and ASSV…DVQP. Positions 199-210 are enriched in acidic residues; it reads NGMDSDMEEEAD. Residues 234–251 are compositionally biased toward basic and acidic residues; the sequence is RENKQPEGLELKQGKGED. Residues 272-281 show a composition bias toward low complexity; the sequence is EEAAAPEAPE. The stretch at 281–311 forms a coiled coil; that stretch reads ENTVQSEAGQIDDLEKDIEKSVNEILGLAES. Phosphoserine is present on S312.

In terms of tissue distribution, ubiquitous.

In terms of biological role, anti-apoptotic protein that modulates a caspase-10 dependent mitochondrial caspase-3/9 feedback amplification loop. The protein is Caspase activity and apoptosis inhibitor 1 (CAAP1) of Homo sapiens (Human).